A 1251-amino-acid polypeptide reads, in one-letter code: Phospholipid-transporting ATPase IC (1251 aa).

Residues 1 to 54 (MSTERDSETTFDEDSQPNDEVVPYSDDETEDELDDQGSAVEPEQNRVNREAEEN) are disordered. Residues 1–108 (MSTERDSETT…TYKYNAFTFI (108 aa)) lie on the Cytoplasmic side of the membrane. Acidic residues predominate over residues 25–35 (SDDETEDELDD). Positions 43 to 54 (EQNRVNREAEEN) are enriched in basic and acidic residues. The helical transmembrane segment at 109–130 (PMNLFEQFKRAANLYFLALLIL) threads the bilayer. At 131 to 136 (QAVPQI) the chain is on the exoplasmic loop side. The helical transmembrane segment at 137–156 (STLAWYTTLVPLLVVLGVTA) threads the bilayer. At 157 to 340 (IKDLVDDVAR…TKIDYLMNYM (184 aa)) the chain is on the cytoplasmic side. A helical transmembrane segment spans residues 341–362 (VYTIFVVLILLSAGLAIGHAYW). Residues 363-389 (EAQVGNSSWYLYDGEDDTPSYRGFLIF) are Exoplasmic loop-facing. A helical membrane pass occupies residues 390–411 (WGYIIVLNTMVPISLYVSVEVI). Over 412-949 (RLGQSHFINW…GRWSYIRMCK (538 aa)) the chain is Cytoplasmic. The active-site 4-aspartylphosphate intermediate is the Asp454. 12 residues coordinate ATP: Asp454, Lys455, Thr456, Glu555, Phe596, Lys619, Arg652, Thr732, Gly733, Asp734, Arg867, and Lys873. Position 454 (Asp454) interacts with Mg(2+). Thr456 contributes to the Mg(2+) binding site. Position 893 (Asp893) interacts with Mg(2+). Residues Asn896 and Asp897 each coordinate ATP. Asp897 provides a ligand contact to Mg(2+). The chain crosses the membrane as a helical span at residues 950 to 970 (FLRYFFYKNFAFTLVHFWYSF). Topologically, residues 971 to 982 (FNGYSAQTAYED) are exoplasmic loop. A helical membrane pass occupies residues 983–1002 (WFITLYNVLYTSLPVLLMGL). Residues 1003–1032 (LDQDVSDKLSLRFPGLYIVGQRDLLFNYKR) lie on the Cytoplasmic side of the membrane. Residues 1033–1054 (FFVSLLHGVLTSMILFFIPLGA) traverse the membrane as a helical segment. Residues 1055 to 1068 (YLQTVGQDGEAPSD) lie on the Exoplasmic loop side of the membrane. A helical transmembrane segment spans residues 1069–1091 (YQSFAVTIASALVITVNFQIGLD). Over 1092–1097 (TSYWTF) the chain is Cytoplasmic. A helical transmembrane segment spans residues 1098–1118 (VNAFSIFGSIALYFGIMFDFH). Residues 1119–1138 (SAGIHVLFPSAFQFTGTASN) lie on the Exoplasmic loop side of the membrane. Residues 1139–1163 (ALRQPYIWLTIILAVAVCLLPVVAI) traverse the membrane as a helical segment. Topologically, residues 1164-1251 (RFLSMTIWPS…TAEYRRTGDS (88 aa)) are cytoplasmic. Ser1223 carries the post-translational modification Phosphoserine.

This sequence belongs to the cation transport ATPase (P-type) (TC 3.A.3) family. Type IV subfamily. In terms of assembly, component of a P4-ATPase flippase complex which consists of a catalytic alpha subunit ATP8B1 and an accessory beta subunit TMEM30A. The flippase ATP8B1:TMEM30A complex can form an intermediate phosphoenzyme in vitro. Also interacts with beta subunit TMEM30B. The cofactor is Mg(2+). In terms of tissue distribution, found in most tissues except brain and skeletal muscle. Most abundant in pancreas and small intestine.

The protein resides in the cell membrane. It is found in the apical cell membrane. The protein localises to the cell projection. Its subcellular location is the stereocilium. It localises to the endoplasmic reticulum. The protein resides in the golgi apparatus. It catalyses the reaction ATP + H2O + phospholipidSide 1 = ADP + phosphate + phospholipidSide 2.. It carries out the reaction a 1,2-diacyl-sn-glycero-3-phosphocholine(out) + ATP + H2O = a 1,2-diacyl-sn-glycero-3-phosphocholine(in) + ADP + phosphate + H(+). The enzyme catalyses a 1,2-diacyl-sn-glycero-3-phospho-L-serine(out) + ATP + H2O = a 1,2-diacyl-sn-glycero-3-phospho-L-serine(in) + ADP + phosphate + H(+). Its function is as follows. Catalytic component of a P4-ATPase flippase complex which catalyzes the hydrolysis of ATP coupled to the transport of phospholipids, in particular phosphatidylcholines (PC), from the outer to the inner leaflet of the plasma membrane. May participate in the establishment of the canalicular membrane integrity by ensuring asymmetric distribution of phospholipids in the canicular membrane. Thus may have a role in the regulation of bile acids transport into the canaliculus, uptake of bile acids from intestinal contents into intestinal mucosa or both and protect hepatocytes from bile salts. Involved in the microvillus formation in polarized epithelial cells; the function seems to be independent from its flippase activity. Participates in correct apical membrane localization of CDC42, CFTR and SLC10A2. Enables CDC42 clustering at the apical membrane during enterocyte polarization through the interaction between CDC42 polybasic region and negatively charged membrane lipids provided by ATP8B1. Together with TMEM30A is involved in uptake of the synthetic drug alkylphospholipid perifosine. Required for the preservation of cochlear hair cells in the inner ear. May act as cardiolipin transporter during inflammatory injury. In Homo sapiens (Human), this protein is Phospholipid-transporting ATPase IC.